Reading from the N-terminus, the 327-residue chain is uncharacterized protein (327 aa).

In terms of domain architecture, S4 RNA-binding spans 12 to 79 (KRLDEFLAKE…LKKELDLEIE (68 aa)). The active site involves Asp-136.

The protein belongs to the pseudouridine synthase RluA family.

The enzyme catalyses a uridine in RNA = a pseudouridine in RNA. This is an uncharacterized protein from Helicobacter pylori (strain ATCC 700392 / 26695) (Campylobacter pylori).